The sequence spans 643 residues: Phosphoenolpyruvate carboxykinase [GTP] (643 aa).

Substrate is bound by residues Arg-102 and 253–255 (YGG). Mn(2+) contacts are provided by Lys-262 and His-282. Ser-304 provides a ligand contact to substrate. Position 305 to 310 (305 to 310 (ACGKTN)) interacts with GTP. Cys-306 is an active-site residue. Asp-329 lines the Mn(2+) pocket. 422–424 (NSR) is a binding site for substrate. GTP is bound by residues Arg-424, Arg-455, and 548–551 (YGDN).

The protein belongs to the phosphoenolpyruvate carboxykinase [GTP] family. As to quaternary structure, monomer. Requires Mn(2+) as cofactor.

The catalysed reaction is oxaloacetate + GTP = phosphoenolpyruvate + GDP + CO2. Functionally, in parasitic nematodes PEPCK carboxylates phosphoenolpyruvate to oxaloacetate thus introducing the products of glycolysis to mitochondrial metabolism. In terms of biological role, catalyzes the conversion of oxaloacetate (OAA) to phosphoenolpyruvate (PEP), the rate-limiting step in the metabolic pathway that produces glucose from lactate and other precursors derived from the citric acid cycle. The sequence is that of Phosphoenolpyruvate carboxykinase [GTP] (PEPCK) from Ascaris suum (Pig roundworm).